We begin with the raw amino-acid sequence, 509 residues long: Methionine--tRNA ligase (509 aa).

Positions Y12–H22 match the 'HIGH' region motif. The short motif at K302 to S306 is the 'KMSKS' region element. K305 is a binding site for ATP.

The protein belongs to the class-I aminoacyl-tRNA synthetase family. MetG type 2B subfamily. In terms of assembly, monomer.

It localises to the cytoplasm. The catalysed reaction is tRNA(Met) + L-methionine + ATP = L-methionyl-tRNA(Met) + AMP + diphosphate. Its function is as follows. Is required not only for elongation of protein synthesis but also for the initiation of all mRNA translation through initiator tRNA(fMet) aminoacylation. This is Methionine--tRNA ligase (metG) from Mycoplasmopsis pulmonis (strain UAB CTIP) (Mycoplasma pulmonis).